We begin with the raw amino-acid sequence, 182 residues long: MAAEEKDPLSYFAAYGSSSSGSSDEEDNSEPEETSRKGQDTAKSAGGYGNKAEKRLPGPDELFRSVTRPAFLYNPLNKQIDWERHVVKAPEEPPKEFKIWKSHYVPPPETYSTEKKPPPPELDMAIKWSNIYEDNGDDAPQNAKKARLLPEGEETVESDDEKDEHTSKKRKIELGEPTKKKK.

The segment at 1–61 (MAAEEKDPLS…AEKRLPGPDE (61 aa)) is disordered. A compositionally biased stretch (acidic residues) spans 23-32 (SDEEDNSEPE). Positions 51–61 (KAEKRLPGPDE) are enriched in basic and acidic residues. T67 carries the phosphothreonine modification. At Y132 the chain carries Phosphotyrosine. Residues 132 to 182 (YEDNGDDAPQNAKKARLLPEGEETVESDDEKDEHTSKKRKIELGEPTKKKK) form a disordered region. The segment covering 151 to 162 (EGEETVESDDEK) has biased composition (acidic residues). The residue at position 158 (S158) is a Phosphoserine. Residues 172–182 (IELGEPTKKKK) show a composition bias toward basic and acidic residues.

It belongs to the UPF0690 family.

The polypeptide is UPF0690 protein C1orf52 homolog (Bos taurus (Bovine)).